The chain runs to 100 residues: Urease subunit gamma (100 aa).

It belongs to the urease gamma subunit family. In terms of assembly, heterotrimer of UreA (gamma), UreB (beta) and UreC (alpha) subunits. Three heterotrimers associate to form the active enzyme.

The protein localises to the cytoplasm. The catalysed reaction is urea + 2 H2O + H(+) = hydrogencarbonate + 2 NH4(+). It functions in the pathway nitrogen metabolism; urea degradation; CO(2) and NH(3) from urea (urease route): step 1/1. This is Urease subunit gamma from Rhodopseudomonas palustris (strain ATCC BAA-98 / CGA009).